Consider the following 379-residue polypeptide: tRNA-specific 2-thiouridylase MnmA (379 aa).

ATP contacts are provided by residues 23–30 and Leu-49; that span reads AMSGGVDS. Catalysis depends on Cys-117, which acts as the Nucleophile. A disulfide bridge connects residues Cys-117 and Cys-214. Gly-141 serves as a coordination point for ATP. The interval 163-165 is interaction with tRNA; it reads RDQ. Cys-214 serves as the catalytic Cysteine persulfide intermediate.

The protein belongs to the MnmA/TRMU family.

The protein localises to the cytoplasm. It catalyses the reaction S-sulfanyl-L-cysteinyl-[protein] + uridine(34) in tRNA + AH2 + ATP = 2-thiouridine(34) in tRNA + L-cysteinyl-[protein] + A + AMP + diphosphate + H(+). Catalyzes the 2-thiolation of uridine at the wobble position (U34) of tRNA, leading to the formation of s(2)U34. In Cereibacter sphaeroides (strain KD131 / KCTC 12085) (Rhodobacter sphaeroides), this protein is tRNA-specific 2-thiouridylase MnmA.